We begin with the raw amino-acid sequence, 109 residues long: Ferredoxin CarAc (109 aa).

A 2Fe-2S ferredoxin-type domain is found at 3-108; sequence AKVRVIFRAA…GLTLELPKAQ (106 aa). [2Fe-2S] cluster contacts are provided by Cys-43, Cys-49, Cys-52, and Cys-89.

Belongs to the adrenodoxin/putidaredoxin family. In terms of assembly, monomer. Carbazole 1,9a-dioxygenase complex consists of a terminal oxygenase component CarAa, a ferredoxin reductase component fdr and a ferredoxin component CarAc. The cofactor is [2Fe-2S] cluster.

Its function is as follows. Part of the multicomponent carbazole 1,9a-dioxygenase (CARDO), that converts carbazole (CAR) into 2-aminobiphenyl-2,3-diol. Acts as a mediator in the electron transfer from fdr to CarAa. The sequence is that of Ferredoxin CarAc (carAc) from Sphingomonas sp.